Here is a 420-residue protein sequence, read N- to C-terminus: MTSDDAAAGLVRVLDAAQGAFLALDSYGGNDRSRAVLAMAEALERSFAQILEANTLDLVVSREMSVADCLCEWLKLTPERLQNTVTILKRLASLPDPLQRVMASPYQFNLAQTYCQLMPLGVVALVYESFPELAAIAAGFCLKTGNSLVLRSCGASSHSTAAICEILREGLLDADLPVDSVSHIPSETSPNVQDLVGNASQLNLVIPYGRPSFVEQISQQCTPPVLKAAMGNCYLYWSSKGDLEMVRQMIIDSHVGHPDPVNAIEKVLVSPGQNPAPLVRLLNNLQAKGFKLRGDAELCEQFPDHLTLAKENEWGKAYLDRTVAFRTTQNLKTAIAWINSHSSGHGDCIATDSYQESRQFSMGVDSALVYVNIPPYFCRNPRHGESLFLGVSSQKGQRRGLIGLEAFMTPKQIVQGESRS.

Belongs to the gamma-glutamyl phosphate reductase family.

The protein localises to the cytoplasm. The catalysed reaction is L-glutamate 5-semialdehyde + phosphate + NADP(+) = L-glutamyl 5-phosphate + NADPH + H(+). Its pathway is amino-acid biosynthesis; L-proline biosynthesis; L-glutamate 5-semialdehyde from L-glutamate: step 2/2. Functionally, catalyzes the NADPH-dependent reduction of L-glutamate 5-phosphate into L-glutamate 5-semialdehyde and phosphate. The product spontaneously undergoes cyclization to form 1-pyrroline-5-carboxylate. In Synechocystis sp. (strain ATCC 27184 / PCC 6803 / Kazusa), this protein is Gamma-glutamyl phosphate reductase 2.